Here is a 458-residue protein sequence, read N- to C-terminus: Chromosomal replication initiator protein DnaA (458 aa).

A domain I, interacts with DnaA modulators region spans residues 1 to 93 (MKTELSEVWQ…NVIEDPAAEP (93 aa)). A domain II region spans residues 94–119 (VDAPNVADLPAGTSAPAAEQNARLLG). The domain III, AAA+ region stretch occupies residues 120 to 336 (YINPKYTFET…GALTRVVAYA (217 aa)). ATP contacts are provided by Gly-164, Gly-166, Lys-167, and Thr-168. Residues 337-458 (NMLKCPLTYD…EQLIARIRAE (122 aa)) are domain IV, binds dsDNA.

The protein belongs to the DnaA family. In terms of assembly, oligomerizes as a right-handed, spiral filament on DNA at oriC.

It is found in the cytoplasm. Plays an essential role in the initiation and regulation of chromosomal replication. ATP-DnaA binds to the origin of replication (oriC) to initiate formation of the DNA replication initiation complex once per cell cycle. Binds the DnaA box (a 9 base pair repeat at the origin) and separates the double-stranded (ds)DNA. Forms a right-handed helical filament on oriC DNA; dsDNA binds to the exterior of the filament while single-stranded (ss)DNA is stabiized in the filament's interior. The ATP-DnaA-oriC complex binds and stabilizes one strand of the AT-rich DNA unwinding element (DUE), permitting loading of DNA polymerase. After initiation quickly degrades to an ADP-DnaA complex that is not apt for DNA replication. Binds acidic phospholipids. The protein is Chromosomal replication initiator protein DnaA of Symbiobacterium thermophilum (strain DSM 24528 / JCM 14929 / IAM 14863 / T).